Reading from the N-terminus, the 78-residue chain is MSRVCKVTGKKPMAGNNVSHAHNKTRRRFLPNLQYHRFWVESENRWVRMRVSTKGIRTIDKKGIDVVLADLRAAGEKI.

It belongs to the bacterial ribosomal protein bL28 family.

The sequence is that of Large ribosomal subunit protein bL28 from Acidithiobacillus ferrooxidans (strain ATCC 23270 / DSM 14882 / CIP 104768 / NCIMB 8455) (Ferrobacillus ferrooxidans (strain ATCC 23270)).